Here is a 550-residue protein sequence, read N- to C-terminus: Hydroxylamine reductase (550 aa).

[2Fe-2S] cluster contacts are provided by Cys3, Cys6, Cys18, and Cys25. Hybrid [4Fe-2O-2S] cluster is bound by residues His249, Glu273, Cys317, Cys405, Cys433, Cys458, Glu492, and Lys494. Residue Cys405 is modified to Cysteine persulfide.

Belongs to the HCP family. [2Fe-2S] cluster serves as cofactor. Requires hybrid [4Fe-2O-2S] cluster as cofactor.

It localises to the cytoplasm. It catalyses the reaction A + NH4(+) + H2O = hydroxylamine + AH2 + H(+). Functionally, catalyzes the reduction of hydroxylamine to form NH(3) and H(2)O. The chain is Hydroxylamine reductase from Yersinia pseudotuberculosis serotype O:1b (strain IP 31758).